A 100-amino-acid chain; its full sequence is Apolipoprotein C-II (100 aa).

The first 22 residues, 1–22 (MGSRFLLALFLVLLVLGCEVQA), serve as a signal peptide directing secretion. Residues 66 to 74 (SVDEKLRDM) are lipid binding. Residues 78–100 (SSAAMTTYASIFTDQILTLLKGE) are lipoprotein lipase cofactor.

This sequence belongs to the apolipoprotein C2 family. Proapolipoprotein C-II is synthesized as a sialic acid containing glycoprotein which is subsequently desialylated prior to its proteolytic processing. In terms of processing, proapolipoprotein C-II, the major form found in plasma undergoes proteolytic cleavage of its N-terminal hexapeptide to generate the mature form apolipoprotein C-II, which occurs as the minor form in plasma.

It is found in the secreted. Its function is as follows. Component of chylomicrons, very low-density lipoproteins (VLDL), low-density lipoproteins (LDL), and high-density lipoproteins (HDL) in plasma. Plays an important role in lipoprotein metabolism as an activator of lipoprotein lipase. In Ellobius talpinus (Northern mole vole), this protein is Apolipoprotein C-II (APOC2).